The chain runs to 84 residues: Acid stress protein IbaG (84 aa).

It belongs to the BolA/IbaG family.

Its function is as follows. Involved in cell resistance against acid stress. In Escherichia coli O6:H1 (strain CFT073 / ATCC 700928 / UPEC), this protein is Acid stress protein IbaG.